We begin with the raw amino-acid sequence, 190 residues long: Elongation factor P-like protein (190 aa).

This sequence belongs to the elongation factor P family.

The sequence is that of Elongation factor P-like protein from Pseudoalteromonas translucida (strain TAC 125).